A 255-amino-acid polypeptide reads, in one-letter code: EEF1A lysine methyltransferase 4 (255 aa).

S-adenosyl-L-methionine contacts are provided by tryptophan 26 and tyrosine 30. The residue at position 39 (tyrosine 39) is a Phosphotyrosine. S-adenosyl-L-methionine is bound by residues tryptophan 41, glycine 66, 88–89 (DY), 113–114 (DV), and lysine 130. The Required for methyltransferase activity motif lies at 129-134 (EKGTLD).

This sequence belongs to the methyltransferase superfamily.

The catalysed reaction is L-lysyl-[protein] + S-adenosyl-L-methionine = N(6)-methyl-L-lysyl-[protein] + S-adenosyl-L-homocysteine + H(+). It carries out the reaction N(6)-methyl-L-lysyl-[protein] + S-adenosyl-L-methionine = N(6),N(6)-dimethyl-L-lysyl-[protein] + S-adenosyl-L-homocysteine + H(+). It catalyses the reaction N(6),N(6)-dimethyl-L-lysyl-[protein] + S-adenosyl-L-methionine = N(6),N(6),N(6)-trimethyl-L-lysyl-[protein] + S-adenosyl-L-homocysteine + H(+). Functionally, protein-lysine methyltransferase that efficiently catalyzes three successive methylations on 'Lys-36' in eukaryotic translation elongation factor 1 alpha (EEF1A1 or EEF1A2). The sequence is that of EEF1A lysine methyltransferase 4 from Homo sapiens (Human).